The primary structure comprises 263 residues: Exosome complex component Rrp4 (263 aa).

Positions 51–127 (GKYIPSRKDF…KAMKVELSMR (77 aa)) constitute an S1 motif domain. Residues 135–196 (SKGRIIEVVP…DRLTTAIEMI (62 aa)) form the KH domain. Residues 213-263 (LRGEPEGTEGSDEEQLVDEEVAGVSLEDDDVTEETSRKVDVLLDNDTDETN) are disordered. The span at 218-245 (EGTEGSDEEQLVDEEVAGVSLEDDDVTE) shows a compositional bias: acidic residues.

It belongs to the RRP4 family. Component of the archaeal exosome complex. Forms a trimer of Rrp4 and/or Csl4 subunits. The trimer associates with a hexameric ring-like arrangement composed of 3 Rrp41-Rrp42 heterodimers.

The protein resides in the cytoplasm. Its function is as follows. Non-catalytic component of the exosome, which is a complex involved in RNA degradation. Increases the RNA binding and the efficiency of RNA degradation. Confers strong poly(A) specificity to the exosome. The protein is Exosome complex component Rrp4 of Methanococcoides burtonii (strain DSM 6242 / NBRC 107633 / OCM 468 / ACE-M).